Reading from the N-terminus, the 269-residue chain is Phosphonoacetaldehyde hydrolase (269 aa).

Asp10 (nucleophile) is an active-site residue. Mg(2+)-binding residues include Asp10 and Ala12. Lys52 serves as the catalytic Schiff-base intermediate with substrate. Asp186 contributes to the Mg(2+) binding site.

Belongs to the HAD-like hydrolase superfamily. PhnX family. Homodimer. Mg(2+) is required as a cofactor.

It carries out the reaction phosphonoacetaldehyde + H2O = acetaldehyde + phosphate + H(+). In terms of biological role, involved in phosphonate degradation. This chain is Phosphonoacetaldehyde hydrolase, found in Salmonella heidelberg (strain SL476).